The chain runs to 258 residues: Adenylate kinase (258 aa).

52-57 is a binding site for ATP; sequence GAGKGT. Residues 72–101 form an NMP region; sequence ATGDMLRSQVAKKTELGKEAKKIMDQGGLV. AMP-binding positions include T73, R78, 99–101, 128–131, and Q135; these read GLV and GFPR. The segment at 169 to 206 is LID; the sequence is GRLVHPASGRSYHKVFNPPKQEMKDDITGEPLIQRSDD. ATP is bound by residues R170 and 179–180; that span reads SY. 2 residues coordinate AMP: R203 and R214. Q242 is a binding site for ATP.

This sequence belongs to the adenylate kinase family. AK2 subfamily. Monomer.

Its subcellular location is the cytoplasm. The protein resides in the cytosol. It is found in the mitochondrion intermembrane space. It carries out the reaction AMP + ATP = 2 ADP. In terms of biological role, catalyzes the reversible transfer of the terminal phosphate group between ATP and AMP. Plays an important role in cellular energy homeostasis and in adenine nucleotide metabolism. Adenylate kinase activity is critical for regulation of the phosphate utilization and the AMP de novo biosynthesis pathways. The chain is Adenylate kinase (adk1) from Aspergillus oryzae (strain ATCC 42149 / RIB 40) (Yellow koji mold).